The primary structure comprises 285 residues: Probable ribosomal RNA small subunit methyltransferase A (285 aa).

Positions 29, 31, 58, 79, 107, and 122 each coordinate S-adenosyl-L-methionine.

The protein belongs to the class I-like SAM-binding methyltransferase superfamily. rRNA adenine N(6)-methyltransferase family. RsmA subfamily.

The protein localises to the cytoplasm. Its function is as follows. Specifically dimethylates two adjacent adenosines in the loop of a conserved hairpin near the 3'-end of 16S rRNA in the 30S particle. May play a critical role in biogenesis of 30S subunits. This is Probable ribosomal RNA small subunit methyltransferase A from Haloarcula marismortui (strain ATCC 43049 / DSM 3752 / JCM 8966 / VKM B-1809) (Halobacterium marismortui).